Consider the following 361-residue polypeptide: Phosphoserine aminotransferase (361 aa).

Residue Arg43 participates in L-glutamate binding. Residues 77–78 (AS), Trp103, Thr153, Asp173, and Gln196 each bind pyridoxal 5'-phosphate. Residue Lys197 is modified to N6-(pyridoxal phosphate)lysine. Residue 238–239 (NT) coordinates pyridoxal 5'-phosphate.

It belongs to the class-V pyridoxal-phosphate-dependent aminotransferase family. SerC subfamily. In terms of assembly, homodimer. The cofactor is pyridoxal 5'-phosphate.

The protein resides in the cytoplasm. It carries out the reaction O-phospho-L-serine + 2-oxoglutarate = 3-phosphooxypyruvate + L-glutamate. The catalysed reaction is 4-(phosphooxy)-L-threonine + 2-oxoglutarate = (R)-3-hydroxy-2-oxo-4-phosphooxybutanoate + L-glutamate. The protein operates within amino-acid biosynthesis; L-serine biosynthesis; L-serine from 3-phospho-D-glycerate: step 2/3. Its pathway is cofactor biosynthesis; pyridoxine 5'-phosphate biosynthesis; pyridoxine 5'-phosphate from D-erythrose 4-phosphate: step 3/5. In terms of biological role, catalyzes the reversible conversion of 3-phosphohydroxypyruvate to phosphoserine and of 3-hydroxy-2-oxo-4-phosphonooxybutanoate to phosphohydroxythreonine. This Azotobacter vinelandii (strain DJ / ATCC BAA-1303) protein is Phosphoserine aminotransferase.